We begin with the raw amino-acid sequence, 479 residues long: MSVSMQHHSSEASPATQPASVIHKNMVPWSERFSYSLSDFACNLSFSLVSTYLMFFYTDVFGISAAIVGTLFLVARIVDAFDGPFWGIMIDHTHTRWGKSRPYWLWFAIPFAVFSVLCFTVPNMSTGMKVVWAYVTYIGVDVLYSAVNIPITSILPSLTSNPQERVTLSTIRQFMGTLGATIISTIALPLVAYFGGGSTSSAHGWFMVALIMAVIAMVIFFIVFANTKERVQTVQSKKSIPIKTSLKALKRNWPWVIVIFINFIYWLGMQTRSQVTVYFFKYNMHDATLASFILGLQLVALLAVVITPWTAKRIGKRNTMLMGMLLAIVGQLILWGGSKALNVPTITVGTIVGYLGTGFVSGLIAVMLADSVDYGEWKNGVRAEGIVTSFSSFSAKFGMGIGGAVTGLILSAGGYVANHAQSAQALNAIEMNYVWVPIVGFGLSAIALLFYKVDKIEPKMLADLEQKHAQENALADDQK.

Transmembrane regions (helical) follow at residues 54-74 (MFFY…LFLV), 102-122 (PYWL…FTVP), 131-151 (VWAY…NIPI), 174-194 (FMGT…VAYF), 205-225 (WFMV…IVFA), 253-273 (WPWV…QTRS), 289-309 (LASF…ITPW), 321-341 (LMGM…SKAL), 348-368 (VGTI…AVML), 397-417 (FGMG…GYVA), and 431-451 (MNYV…LLFY).

The protein belongs to the sodium:galactoside symporter (TC 2.A.2) family.

It is found in the cell membrane. Its function is as follows. Involved in the metabolism of isoprimeverose. Transports isoprimeverose into the cell. Transport is driven by the proton motive force generated by malolactic fermentation. Cannot transport D-xylose. The protein is Isoprimeverose transporter of Lactiplantibacillus pentosus (Lactobacillus pentosus).